The primary structure comprises 224 residues: Processed variable antigen (224 aa).

Tandem repeats lie at residues 1–6 (ETGESK), 7–12 (ETGESK), 13–18 (ETGESK), 19–24 (ETGESK), 25–30 (ETGESK), 31–36 (ETGESK), 37–42 (ETGESK), 43–48 (ETGESK), 49–54 (ETGESK), 55–60 (ETGESK), 61–66 (ETGESK), 67–72 (ETGESK), 73–78 (ETGESK), 79–84 (ETGESK), 85–90 (ETGESK), 91–96 (ETGESK), and 97–102 (ETGESK). Positions 1-102 (ETGESKETGE…GESKETGESK (102 aa)) are 17 X 6 AA tandem repeats of E-T-G-E-S-K. Residues 1–137 (ETGESKETGE…TEESKDREGN (137 aa)) are compositionally biased toward basic and acidic residues. The tract at residues 1-224 (ETGESKETGE…KKADNKKKKK (224 aa)) is disordered. A compositionally biased stretch (low complexity) spans 144-153 (ENSENSNVTS). Composition is skewed to basic and acidic residues over residues 156 to 173 (EETKKLAEKEENEGEKLG) and 185 to 217 (EDPKKLTEQEENGTKESSEETKDDKPEENEKKA).

This chain is Processed variable antigen, found in Plasmodium falciparum.